The sequence spans 135 residues: ATP synthase epsilon chain (135 aa).

The protein belongs to the ATPase epsilon chain family. F-type ATPases have 2 components, CF(1) - the catalytic core - and CF(0) - the membrane proton channel. CF(1) has five subunits: alpha(3), beta(3), gamma(1), delta(1), epsilon(1). CF(0) has three main subunits: a, b and c.

It localises to the cell inner membrane. Its function is as follows. Produces ATP from ADP in the presence of a proton gradient across the membrane. The polypeptide is ATP synthase epsilon chain (Rhodopseudomonas palustris (strain BisA53)).